The sequence spans 549 residues: OBERON-like protein (549 aa).

Residues 1–56 are disordered; sequence MLPPRQQPRPGGLQTSLSLVSPDACGSPNPQERGSTSDQARDSPSESASSRETWPT. Composition is skewed to polar residues over residues 28–38 and 45–56; these read PNPQERGSTSD and SESASSRETWPT. A PHD-type zinc finger spans residues 224–288; it reads LCMCVICYKF…LFRCHACSRT (65 aa). Residues 394–520 adopt a coiled-coil conformation; the sequence is VQEAIRKMEA…YLFEKIKLQE (127 aa). The interval 519-549 is disordered; that stretch reads QESSRASQSSAGGNDPSQMMYSKIQDLIKNM. Residues 521 to 538 are compositionally biased toward polar residues; sequence SSRASQSSAGGNDPSQMM.

As to quaternary structure, self-interacts and probably forms heteromers. Binds to VPg of pea seed borne mosaic virus (PSbMV), turnip mosaic virus (TuMV) and lettuce mosaic virus (LMV), but not with VPg of tobacco etch virus (TEV), cowpea mosaic virus (CPMV), tomato black ring virus (TBRV) and grapevine fan leaf virus (GFLV).

Its subcellular location is the nucleus. Required for the maintenance and/or establishment of both the shoot and root meristems, probably by controlling the expression of the meristem genes and of genes required for auxin responses. Involved in the development of the basal pole and in auxin-mediated root and vascular development in the embryo. Confers sensitivity to turnip mosaic virus (TuMV) probably by promoting viral movement and multiplication via interaction with TuMV VPg. The chain is OBERON-like protein (PVIP) from Nicotiana benthamiana.